Here is a 505-residue protein sequence, read N- to C-terminus: Peroxisome proliferator-activated receptor gamma (505 aa).

A glycan (O-linked (GlcNAc) threonine) is linked at threonine 84. Residue serine 112 is modified to Phosphoserine; by MAPK. The segment at residues 136-210 (AIECRVCGDK…VGMSHNAIRF (75 aa)) is a DNA-binding region (nuclear receptor). 2 consecutive NR C4-type zinc fingers follow at residues 139-159 (CRVCGDKASGFHYGVHACEGC) and 176-198 (CDLNCRIHKKSRNKCQYCRFQKC). The interaction with FAM120B stretch occupies residues 205-280 (HNAIRFGRMP…DKSPFVIYDM (76 aa)). An NR LBD domain is found at 238–503 (DLRALAKHLY…HPLLQEIYKD (266 aa)). Lysine 252 is covalently cross-linked (Glycyl lysine isopeptide (Lys-Gly) (interchain with G-Cter in ubiquitin)). Positions 495-503 (PLLQEIYKD) match the 9aaTAD motif.

Belongs to the nuclear hormone receptor family. NR1 subfamily. In terms of assembly, interacts with FOXO1 (acetylated form). Heterodimer with other nuclear receptors, such as RXRA. The heterodimer with the retinoic acid receptor RXRA is called adipocyte-specific transcription factor ARF6. Interacts with NCOA6 coactivator, leading to a strong increase in transcription of target genes. Interacts with coactivator PPARBP, leading to a mild increase in transcription of target genes. Interacts with NOCA7 in a ligand-inducible manner. Interacts with NCOA1 and NCOA2 LXXLL motifs. Interacts with ASXL1, ASXL2, DNTTIP2, FAM120B, MAP2K1/MEK1, NR0B2, PDPK1, PRDM16, PRMT2 and TGFB1I1. Interacts (when activated by agonist) with PPP5C. Interacts with HELZ2 and THRAP3; the interaction stimulates the transcriptional activity of PPARG. Interacts with PER2, the interaction is ligand dependent and blocks PPARG recruitment to target promoters. Interacts with NOCT. Interacts with ACTN4. Interacts (when in the liganded conformation) with GPS2. Interacts with CRY1 and CRY2 in a ligand-dependent manner. In the absence of hormonal ligand, interacts with TACC1. In macrophages, interacts with PAQR3 and STUB1; the interactions promote PPARG poylubiquitination and STUB1-mediated degradation. Phosphorylated by MAPK. The phosphorylation inhibits PPAR gamma activity. Post-translationally, O-GlcNAcylation at Thr-84 reduces transcriptional activity in adipocytes. In terms of processing, phosphorylated at basal conditions and dephosphorylated when treated with the ligand. May be dephosphorylated by PPP5C. The phosphorylated form may be inactive and dephosphorylation at induces adipogenic activity. Ubiquitinated by E3 ubiquitin-protein ligase complex containing FBXO9; leading to proteasomal degradation. Ubiquitinated at Lys-252 by TRIM55 leading to proteasomal degradation. Ubiquitinated by E3 ubiquitin-protein ligase STUB1/CHIP; leading to proteasomal degradation. In terms of tissue distribution, highest expression in adipose tissue.

It localises to the nucleus. The protein resides in the cytoplasm. PDPK1 activates its transcriptional activity independently of its kinase activity. In terms of biological role, nuclear receptor that binds peroxisome proliferators such as hypolipidemic drugs and fatty acids. Once activated by a ligand, the nuclear receptor binds to DNA specific PPAR response elements (PPRE) and modulates the transcription of its target genes, such as acyl-CoA oxidase. It therefore controls the peroxisomal beta-oxidation pathway of fatty acids. Key regulator of adipocyte differentiation and glucose homeostasis. ARF6 acts as a key regulator of the tissue-specific adipocyte P2 (aP2) enhancer. Acts as a critical regulator of gut homeostasis by suppressing NF-kappa-B-mediated pro-inflammatory responses. Plays a role in the regulation of cardiovascular circadian rhythms by regulating the transcription of BMAL1 in the blood vessels. The protein is Peroxisome proliferator-activated receptor gamma (Pparg) of Rattus norvegicus (Rat).